A 309-amino-acid chain; its full sequence is Porphobilinogen deaminase (309 aa).

At C241 the chain carries S-(dipyrrolylmethanemethyl)cysteine.

This sequence belongs to the HMBS family. Monomer. Requires dipyrromethane as cofactor.

It carries out the reaction 4 porphobilinogen + H2O = hydroxymethylbilane + 4 NH4(+). The protein operates within porphyrin-containing compound metabolism; protoporphyrin-IX biosynthesis; coproporphyrinogen-III from 5-aminolevulinate: step 2/4. Tetrapolymerization of the monopyrrole PBG into the hydroxymethylbilane pre-uroporphyrinogen in several discrete steps. The chain is Porphobilinogen deaminase from Bacillus cereus (strain AH187).